A 124-amino-acid polypeptide reads, in one-letter code: MATVNQLVRKPRARKVAKSNVPALEACPQKRGVCTRVYTTTPKKPNSALRKVCRVRLTNGFEVTSYIGGEGHNLQEHSVILIRGGRVRDLPGVRYHTVRGALDCSGVKDRKQARSKYGVKRPKA.

3-methylthioaspartic acid is present on aspartate 89. Lysine 108 carries the post-translational modification N6-acetyllysine.

The protein belongs to the universal ribosomal protein uS12 family. As to quaternary structure, part of the 30S ribosomal subunit. Contacts proteins S8 and S17. May interact with IF1 in the 30S initiation complex.

Functionally, with S4 and S5 plays an important role in translational accuracy. Its function is as follows. Interacts with and stabilizes bases of the 16S rRNA that are involved in tRNA selection in the A site and with the mRNA backbone. Located at the interface of the 30S and 50S subunits, it traverses the body of the 30S subunit contacting proteins on the other side and probably holding the rRNA structure together. The combined cluster of proteins S8, S12 and S17 appears to hold together the shoulder and platform of the 30S subunit. This is Small ribosomal subunit protein uS12 from Escherichia coli O6:K15:H31 (strain 536 / UPEC).